Here is a 151-residue protein sequence, read N- to C-terminus: Deoxyuridine 5'-triphosphate nucleotidohydrolase (151 aa).

Residue Arg-28 coordinates Mg(2+). DUTP contacts are provided by residues 72–74 (PRS), 86–89 (GVID), Tyr-92, Gly-97, Ile-99, and Arg-115.

The protein belongs to the dUTPase family. Mg(2+) serves as cofactor.

The enzyme catalyses dUTP + H2O = dUMP + diphosphate + H(+). Its function is as follows. This enzyme is involved in nucleotide metabolism: it produces dUMP, the immediate precursor of thymidine nucleotides and it decreases the intracellular concentration of dUTP so that uracil cannot be incorporated into DNA. In Monkeypox virus, this protein is Deoxyuridine 5'-triphosphate nucleotidohydrolase (OPG046).